The chain runs to 132 residues: CDGSH iron-sulfur domain-containing protein 2 homolog (132 aa).

Topologically, residues 1-35 (MEPISHLVKSSLPNYLSSLPVPDSLGGWFKLSFKD) are lumenal. A helical transmembrane segment spans residues 36–58 (WLALIPPTAVLAGLGYTAYLAFC). At 59 to 132 (PAAQCSAKSA…VGPVVVSKKK (74 aa)) the chain is on the cytoplasmic side. Residues Cys97, Cys99, Cys108, and His112 each contribute to the [2Fe-2S] cluster site.

This sequence belongs to the CISD protein family. CISD2 subfamily. It depends on [2Fe-2S] cluster as a cofactor.

The protein localises to the endoplasmic reticulum membrane. This Drosophila grimshawi (Hawaiian fruit fly) protein is CDGSH iron-sulfur domain-containing protein 2 homolog.